We begin with the raw amino-acid sequence, 208 residues long: Interleukin-6 (208 aa).

The signal sequence occupies residues 1–20; sequence MNSLSTIAFSLGLLLVTATA. A disulfide bridge links Cys-67 with Cys-73. Residue Ser-76 is modified to Phosphoserine. A disulfide bridge connects residues Cys-96 and Cys-106. An N-linked (GlcNAc...) asparagine glycan is attached at Asn-167.

This sequence belongs to the IL-6 superfamily. As to quaternary structure, component of a hexamer of two molecules each of IL6, IL6R and IL6ST; first binds to IL6R to associate with the signaling subunit IL6ST. Interacts with IL6R (via the N-terminal ectodomain); this interaction may be affected by IL6R-binding with SORL1, hence decreasing IL6 cis signaling. Interacts with SORL1 (via the N-terminal ectodomain); this interaction leads to IL6 internalization and lysosomal degradation. May form a trimeric complex with the soluble SORL1 ectodomain and soluble IL6R receptor; this interaction might stabilize circulating IL6, hence promoting IL6 trans signaling.

The protein resides in the secreted. Cytokine with a wide variety of biological functions in immunity, tissue regeneration, and metabolism. Binds to IL6R, then the complex associates to the signaling subunit IL6ST/gp130 to trigger the intracellular IL6-signaling pathway. The interaction with the membrane-bound IL6R and IL6ST stimulates 'classic signaling', whereas the binding of IL6 and soluble IL6R to IL6ST stimulates 'trans-signaling'. Alternatively, 'cluster signaling' occurs when membrane-bound IL6:IL6R complexes on transmitter cells activate IL6ST receptors on neighboring receiver cells. Its function is as follows. IL6 is a potent inducer of the acute phase response. Rapid production of IL6 contributes to host defense during infection and tissue injury, but excessive IL6 synthesis is involved in disease pathology. In the innate immune response, is synthesized by myeloid cells, such as macrophages and dendritic cells, upon recognition of pathogens through toll-like receptors (TLRs) at the site of infection or tissue injury. In the adaptive immune response, is required for the differentiation of B cells into immunoglobulin-secreting cells. Plays a major role in the differentiation of CD4(+) T cell subsets. Essential factor for the development of T follicular helper (Tfh) cells that are required for the induction of germinal-center formation. Required to drive naive CD4(+) T cells to the Th17 lineage. Also required for proliferation of myeloma cells and the survival of plasmablast cells. Functionally, acts as an essential factor in bone homeostasis and on vessels directly or indirectly by induction of VEGF, resulting in increased angiogenesis activity and vascular permeability. Induces, through 'trans-signaling' and synergistically with IL1B and TNF, the production of VEGF. Involved in metabolic controls, is discharged into the bloodstream after muscle contraction increasing lipolysis and improving insulin resistance. 'Trans-signaling' in central nervous system also regulates energy and glucose homeostasis. Mediates, through GLP-1, crosstalk between insulin-sensitive tissues, intestinal L cells and pancreatic islets to adapt to changes in insulin demand. Also acts as a myokine. Plays a protective role during liver injury, being required for maintenance of tissue regeneration. Also has a pivotal role in iron metabolism by regulating HAMP/hepcidin expression upon inflammation or bacterial infection. Through activation of IL6ST-YAP-NOTCH pathway, induces inflammation-induced epithelial regeneration. The polypeptide is Interleukin-6 (IL6) (Delphinapterus leucas (Beluga whale)).